The chain runs to 498 residues: Glycerol kinase (498 aa).

Thr-12 contributes to the ADP binding site. Residues Thr-12, Thr-13, and Ser-14 each contribute to the ATP site. Thr-12 is a binding site for sn-glycerol 3-phosphate. Arg-16 contributes to the ADP binding site. Sn-glycerol 3-phosphate is bound by residues Arg-82, Glu-83, and Tyr-134. Arg-82, Glu-83, and Tyr-134 together coordinate glycerol. His-230 is subject to Phosphohistidine; by HPr. Asp-244 is a binding site for sn-glycerol 3-phosphate. 2 residues coordinate glycerol: Asp-244 and Gln-245. Positions 266 and 309 each coordinate ADP. ATP-binding residues include Thr-266, Gly-309, Gln-313, and Gly-410. ADP is bound by residues Gly-410 and Asn-414.

This sequence belongs to the FGGY kinase family. In terms of assembly, homotetramer and homodimer (in equilibrium). The phosphoenolpyruvate-dependent sugar phosphotransferase system (PTS), including enzyme I, and histidine-containing protein (HPr) are required for the phosphorylation, which leads to the activation of the enzyme.

The catalysed reaction is glycerol + ATP = sn-glycerol 3-phosphate + ADP + H(+). It participates in polyol metabolism; glycerol degradation via glycerol kinase pathway; sn-glycerol 3-phosphate from glycerol: step 1/1. Its activity is regulated as follows. Activated by phosphorylation and inhibited by fructose 1,6-bisphosphate (FBP). Functionally, key enzyme in the regulation of glycerol uptake and metabolism. Catalyzes the phosphorylation of glycerol to yield sn-glycerol 3-phosphate. The sequence is that of Glycerol kinase from Staphylococcus aureus (strain MSSA476).